A 147-amino-acid chain; its full sequence is Hemoglobin subunit gamma (147 aa).

In terms of domain architecture, Globin spans 3–147 (HFTAEEKAAI…VATALAHKYH (145 aa)). 2 residues coordinate heme b: His64 and His93.

Belongs to the globin family. Heterotetramer of two alpha chains and two gamma chains. Red blood cells.

Its function is as follows. This protein functions as an embryonic globin, but the gene structure and chromosomal location resemble more closely the human gamma chain gene, which codes for a fetal globin. This Oryctolagus cuniculus (Rabbit) protein is Hemoglobin subunit gamma (HBG).